Consider the following 277-residue polypeptide: Phosphatidylglycerol--prolipoprotein diacylglyceryl transferase (277 aa).

A run of 4 helical transmembrane segments spans residues 18–38 (ISVKWYGVIIASAVVIALLLA), 51–71 (IIVDLLIWAIPISIISARIYY), 89–109 (IWHGGIAIYGALIGAVLTAII), and 116–136 (ISFWQLADVVAPSLIIAQAIG). Arg137 contacts a 1,2-diacyl-sn-glycero-3-phospho-(1'-sn-glycerol). 3 helical membrane passes run 177–197 (QPTFLYESLWNVLGFVILLII), 205–225 (GELFLGYVIWYSFGRFFIEGM), and 235–255 (FRVSQALSLLLIVLSIGIIIY).

The protein belongs to the Lgt family.

The protein localises to the cell membrane. The enzyme catalyses L-cysteinyl-[prolipoprotein] + a 1,2-diacyl-sn-glycero-3-phospho-(1'-sn-glycerol) = an S-1,2-diacyl-sn-glyceryl-L-cysteinyl-[prolipoprotein] + sn-glycerol 1-phosphate + H(+). It participates in protein modification; lipoprotein biosynthesis (diacylglyceryl transfer). Its function is as follows. Catalyzes the transfer of the diacylglyceryl group from phosphatidylglycerol to the sulfhydryl group of the N-terminal cysteine of a prolipoprotein, the first step in the formation of mature lipoproteins. The polypeptide is Phosphatidylglycerol--prolipoprotein diacylglyceryl transferase (Listeria monocytogenes serovar 1/2a (strain ATCC BAA-679 / EGD-e)).